A 317-amino-acid polypeptide reads, in one-letter code: Ornithine carbamoyltransferase (317 aa).

Residues 57–60 (STRT), Q84, R108, and 135–138 (HPCQ) each bind carbamoyl phosphate. Residues N166, D230, and 234–235 (SM) contribute to the L-ornithine site. Carbamoyl phosphate-binding positions include 270 to 271 (CL) and R298.

Belongs to the aspartate/ornithine carbamoyltransferase superfamily. OTCase family. As to quaternary structure, homododecamer.

It localises to the cytoplasm. It carries out the reaction carbamoyl phosphate + L-ornithine = L-citrulline + phosphate + H(+). Its pathway is amino-acid biosynthesis; L-arginine biosynthesis; L-arginine from L-ornithine and carbamoyl phosphate: step 1/3. In terms of biological role, reversibly catalyzes the transfer of the carbamoyl group from carbamoyl phosphate (CP) to the N(epsilon) atom of ornithine (ORN) to produce L-citrulline. This chain is Ornithine carbamoyltransferase, found in Pyrococcus abyssi (strain GE5 / Orsay).